The following is a 313-amino-acid chain: Glucan 1,3-beta-glucosidase (313 aa).

The first 23 residues, 1–23, serve as a signal peptide directing secretion; that stretch reads MRFSTTLATAATALFFTASQVSA. Glu-124 functions as the Proton donor in the catalytic mechanism. The N-linked (GlcNAc...) asparagine glycan is linked to Asn-202. Glu-233 functions as the Nucleophile in the catalytic mechanism. An N-linked (GlcNAc...) asparagine glycan is attached at Asn-284.

This sequence belongs to the glycosyl hydrolase 17 family.

Its subcellular location is the secreted. The protein localises to the cell wall. The catalysed reaction is Successive hydrolysis of beta-D-glucose units from the non-reducing ends of (1-&gt;3)-beta-D-glucans, releasing alpha-glucose.. Glucanases possibly play a role in cell expansion during growth, in cell-cell fusion during mating, and in spore release during sporulation. This enzyme may be involved in beta-glucan degradation and also function biosynthetically as a transglycosylase. The sequence is that of Glucan 1,3-beta-glucosidase (BGL2) from Saccharomyces cerevisiae (strain ATCC 204508 / S288c) (Baker's yeast).